The primary structure comprises 208 residues: ATP-dependent Clp protease proteolytic subunit (208 aa).

Ser105 serves as the catalytic Nucleophile. His130 is an active-site residue.

It belongs to the peptidase S14 family. Fourteen ClpP subunits assemble into 2 heptameric rings which stack back to back to give a disk-like structure with a central cavity, resembling the structure of eukaryotic proteasomes.

The protein resides in the cytoplasm. The catalysed reaction is Hydrolysis of proteins to small peptides in the presence of ATP and magnesium. alpha-casein is the usual test substrate. In the absence of ATP, only oligopeptides shorter than five residues are hydrolyzed (such as succinyl-Leu-Tyr-|-NHMec, and Leu-Tyr-Leu-|-Tyr-Trp, in which cleavage of the -Tyr-|-Leu- and -Tyr-|-Trp bonds also occurs).. Functionally, cleaves peptides in various proteins in a process that requires ATP hydrolysis. Has a chymotrypsin-like activity. Plays a major role in the degradation of misfolded proteins. In Xanthomonas axonopodis pv. citri (strain 306), this protein is ATP-dependent Clp protease proteolytic subunit.